The following is a 458-amino-acid chain: Periphilin-1 (458 aa).

Basic and acidic residues-rich tracts occupy residues 1–18 (MWSEGRYEYERIPRERAP) and 63–107 (EGRS…DGFR). Disordered stretches follow at residues 1–51 (MWSE…SYNR) and 63–284 (EGRS…LFED). A Nuclear localization signal motif is present at residues 103–109 (RDGFRRK). Lysine 109 participates in a covalent cross-link: Glycyl lysine isopeptide (Lys-Gly) (interchain with G-Cter in SUMO2). A phosphoserine mark is found at serine 110, serine 114, serine 133, and serine 140. Over residues 116–142 (YARERSPYKRDNTFFRESPVGRKDSPH) the composition is skewed to basic and acidic residues. The segment covering 143–154 (SRSGSSVSSRSY) has biased composition (low complexity). Lysine 160 is covalently cross-linked (Glycyl lysine isopeptide (Lys-Gly) (interchain with G-Cter in SUMO2)). Residues serine 161 and serine 167 each carry the phosphoserine modification. A Glycyl lysine isopeptide (Lys-Gly) (interchain with G-Cter in SUMO2) cross-link involves residue lysine 180. Residues 181-194 (RQNEGNPERDKERP) show a composition bias toward basic and acidic residues. Residue serine 197 is modified to Phosphoserine. Lysine 199 is covalently cross-linked (Glycyl lysine isopeptide (Lys-Gly) (interchain with G-Cter in SUMO2)). 2 positions are modified to phosphoserine: serine 201 and serine 205. The span at 205 to 215 (SPSSGSAVSSS) shows a compositional bias: low complexity. Over residues 217–230 (VLDKPSRLTEKELA) the composition is skewed to basic and acidic residues. A Glycyl lysine isopeptide (Lys-Gly) (interchain with G-Cter in SUMO2) cross-link involves residue lysine 227. Residues lysine 235 and lysine 240 each carry the N6-acetyllysine; alternate modification. Residues lysine 235 and lysine 240 each participate in a glycyl lysine isopeptide (Lys-Gly) (interchain with G-Cter in SUMO2); alternate cross-link. Positions 237–246 (AAEKLEKSDE) are enriched in basic and acidic residues. Residue serine 325 is modified to Phosphoserine. Lysine 328 is covalently cross-linked (Glycyl lysine isopeptide (Lys-Gly) (interchain with G-Cter in SUMO2)). The interval 345 to 406 (GQTWQQVPPV…TQLRRTTGAP (62 aa)) is disordered. Residues 377 to 386 (PQPPQAPQPL) are compositionally biased toward pro residues. Positions 388–398 (PRKKRVRRTTQ) are enriched in basic residues. Lysine 453 participates in a covalent cross-link: Glycyl lysine isopeptide (Lys-Gly) (interchain with G-Cter in SUMO2).

In terms of assembly, homodimer. Component of the HUSH complex; at least composed of TASOR, PPHLN1 and MPHOSPH8. Interacts with SIN3A and HDAC1. May interact with PPL. Post-translationally, substrate of transglutaminase (in vitro). Ubiquitous.

Its subcellular location is the nucleus. It is found in the cytoplasm. The protein resides in the chromosome. Functionally, component of the HUSH complex, a multiprotein complex that mediates epigenetic repression. The HUSH complex is recruited to genomic loci rich in H3K9me3 and is probably required to maintain transcriptional silencing by promoting recruitment of SETDB1, a histone methyltransferase that mediates further deposition of H3K9me3. In the HUSH complex, contributes to the maintenance of the complex at chromatin. Acts as a transcriptional corepressor and regulates the cell cycle, probably via the HUSH complex. The HUSH complex is also involved in the silencing of unintegrated retroviral DNA: some part of the retroviral DNA formed immediately after infection remains unintegrated in the host genome and is transcriptionally repressed. May be involved in epithelial differentiation by contributing to epidermal integrity and barrier formation. The protein is Periphilin-1 of Homo sapiens (Human).